The chain runs to 1047 residues: Carbamoyl phosphate synthase large chain (1047 aa).

A carboxyphosphate synthetic domain region spans residues 1–398 (MPRRDDIHRI…ALMKAIASLD (398 aa)). Positions 129, 169, 175, 176, 208, 210, 215, 241, 242, 243, 284, and 296 each coordinate ATP. In terms of domain architecture, ATP-grasp 1 spans 133–325 (YEFLKAMGEP…IARIAAKIAA (193 aa)). The Mg(2+) site is built by Gln-284, Glu-296, and Asn-298. 3 residues coordinate Mn(2+): Gln-284, Glu-296, and Asn-298. Positions 399 to 539 (NAFSSNIRLH…YSTYEDEDET (141 aa)) are oligomerization domain. A carbamoyl phosphate synthetic domain region spans residues 540–916 (PDLSGSIMII…ALRKSLQRSI (377 aa)). The 190-residue stretch at 665–854 (SRVIEGLGIK…WVRLAVECMI (190 aa)) folds into the ATP-grasp 2 domain. ATP is bound by residues Arg-701, Lys-738, Leu-740, Glu-745, Gly-770, Val-771, His-772, Ser-773, Gln-813, and Glu-825. Residues Gln-813, Glu-825, and Asn-827 each contribute to the Mg(2+) site. Residues Gln-813, Glu-825, and Asn-827 each coordinate Mn(2+). The 138-residue stretch at 910-1047 (KSLQRSISSV…REIGDYLQVS (138 aa)) folds into the MGS-like domain. The segment at 916 to 1047 (ISSVLITVRD…REIGDYLQVS (132 aa)) is allosteric domain.

Belongs to the CarB family. Composed of two chains; the small (or glutamine) chain promotes the hydrolysis of glutamine to ammonia, which is used by the large (or ammonia) chain to synthesize carbamoyl phosphate. Tetramer of heterodimers (alpha,beta)4. Mg(2+) is required as a cofactor. It depends on Mn(2+) as a cofactor.

The enzyme catalyses hydrogencarbonate + L-glutamine + 2 ATP + H2O = carbamoyl phosphate + L-glutamate + 2 ADP + phosphate + 2 H(+). It catalyses the reaction hydrogencarbonate + NH4(+) + 2 ATP = carbamoyl phosphate + 2 ADP + phosphate + 2 H(+). It participates in amino-acid biosynthesis; L-arginine biosynthesis; carbamoyl phosphate from bicarbonate: step 1/1. It functions in the pathway pyrimidine metabolism; UMP biosynthesis via de novo pathway; (S)-dihydroorotate from bicarbonate: step 1/3. Its function is as follows. Large subunit of the glutamine-dependent carbamoyl phosphate synthetase (CPSase). CPSase catalyzes the formation of carbamoyl phosphate from the ammonia moiety of glutamine, carbonate, and phosphate donated by ATP, constituting the first step of 2 biosynthetic pathways, one leading to arginine and/or urea and the other to pyrimidine nucleotides. The large subunit (synthetase) binds the substrates ammonia (free or transferred from glutamine from the small subunit), hydrogencarbonate and ATP and carries out an ATP-coupled ligase reaction, activating hydrogencarbonate by forming carboxy phosphate which reacts with ammonia to form carbamoyl phosphate. This is Carbamoyl phosphate synthase large chain from Thermoplasma acidophilum (strain ATCC 25905 / DSM 1728 / JCM 9062 / NBRC 15155 / AMRC-C165).